A 78-amino-acid polypeptide reads, in one-letter code: NAD(P)H-quinone oxidoreductase subunit O (78 aa).

Belongs to the complex I NdhO subunit family. NDH-1 can be composed of about 15 different subunits; different subcomplexes with different compositions have been identified which probably have different functions.

It localises to the cellular thylakoid membrane. It catalyses the reaction a plastoquinone + NADH + (n+1) H(+)(in) = a plastoquinol + NAD(+) + n H(+)(out). The catalysed reaction is a plastoquinone + NADPH + (n+1) H(+)(in) = a plastoquinol + NADP(+) + n H(+)(out). Functionally, NDH-1 shuttles electrons from an unknown electron donor, via FMN and iron-sulfur (Fe-S) centers, to quinones in the respiratory and/or the photosynthetic chain. The immediate electron acceptor for the enzyme in this species is believed to be plastoquinone. Couples the redox reaction to proton translocation, and thus conserves the redox energy in a proton gradient. Cyanobacterial NDH-1 also plays a role in inorganic carbon-concentration. This Prochlorococcus marinus (strain MIT 9312) protein is NAD(P)H-quinone oxidoreductase subunit O.